A 164-amino-acid chain; its full sequence is Putative pre-16S rRNA nuclease (164 aa).

The protein belongs to the YqgF nuclease family.

The protein localises to the cytoplasm. Functionally, could be a nuclease involved in processing of the 5'-end of pre-16S rRNA. The chain is Putative pre-16S rRNA nuclease from Rhizobium etli (strain CIAT 652).